We begin with the raw amino-acid sequence, 149 residues long: UPF0260 protein PSPPH_1551 (149 aa).

The protein belongs to the UPF0260 family.

The sequence is that of UPF0260 protein PSPPH_1551 from Pseudomonas savastanoi pv. phaseolicola (strain 1448A / Race 6) (Pseudomonas syringae pv. phaseolicola (strain 1448A / Race 6)).